A 115-amino-acid chain; its full sequence is MDLIKAVESEQLKKDITPFNVGDTVRVYYKVIEGDRERIQPFEGIVIKRSGSGLRETFTVRRVSYGVGVERTFPLHSPRLEKIEVIRRGKVRRAKLYYLRKRVGKAATKIKELME.

The protein belongs to the bacterial ribosomal protein bL19 family.

Its function is as follows. This protein is located at the 30S-50S ribosomal subunit interface and may play a role in the structure and function of the aminoacyl-tRNA binding site. This Caldanaerobacter subterraneus subsp. tengcongensis (strain DSM 15242 / JCM 11007 / NBRC 100824 / MB4) (Thermoanaerobacter tengcongensis) protein is Large ribosomal subunit protein bL19.